Consider the following 229-residue polypeptide: MKQQQWCGMTAKMGTVLSGVFTIMAVDMYLIFEQKHLGNGSCTEITPKYRGASNIINNFIICWSFKIVLFLSFITILISCFLLYSVYAQIFRGLVIYIVWIFFYETANVVIQILTNNDFDIKEVRIMRWFGLVSRTVMHCFWMFFVINYAHITYKNRSQGNIISYKRRISTAEILHSRNKRLSISSGFSGSHLESQYFERQSFHTSIFTCLSPVPSSAPSTCRYTIDVC.

Residues 13–33 traverse the membrane as a helical segment; the sequence is MGTVLSGVFTIMAVDMYLIFE. N-linked (GlcNAc...) asparagine glycosylation occurs at N39. Transmembrane regions (helical) follow at residues 67-87, 94-114, and 129-149; these read IVLF…YSVY, LVIY…IQIL, and WFGL…VINY. N-linked (GlcNAc...) asparagine glycosylation is present at N156.

It localises to the membrane. The protein is Transmembrane protein 217 (TMEM217) of Homo sapiens (Human).